Here is a 209-residue protein sequence, read N- to C-terminus: uncharacterized protein (209 aa).

May influence the expression of the nuc gene. This is an uncharacterized protein from Shigella flexneri.